A 284-amino-acid polypeptide reads, in one-letter code: Pantothenate synthetase (284 aa).

30–37 (MGALHEGH) is a binding site for ATP. The active-site Proton donor is histidine 37. Residue glutamine 61 participates in (R)-pantoate binding. Glutamine 61 lines the beta-alanine pocket. 147–150 (GEKD) contributes to the ATP binding site. (R)-pantoate is bound at residue glutamine 153. ATP is bound by residues valine 176 and 184 to 187 (TSSR).

It belongs to the pantothenate synthetase family. As to quaternary structure, homodimer.

The protein resides in the cytoplasm. It catalyses the reaction (R)-pantoate + beta-alanine + ATP = (R)-pantothenate + AMP + diphosphate + H(+). Its pathway is cofactor biosynthesis; (R)-pantothenate biosynthesis; (R)-pantothenate from (R)-pantoate and beta-alanine: step 1/1. Functionally, catalyzes the condensation of pantoate with beta-alanine in an ATP-dependent reaction via a pantoyl-adenylate intermediate. This chain is Pantothenate synthetase, found in Chlorobaculum tepidum (strain ATCC 49652 / DSM 12025 / NBRC 103806 / TLS) (Chlorobium tepidum).